The chain runs to 203 residues: Imidazoleglycerol-phosphate dehydratase (203 aa).

Belongs to the imidazoleglycerol-phosphate dehydratase family.

Its subcellular location is the cytoplasm. The enzyme catalyses D-erythro-1-(imidazol-4-yl)glycerol 3-phosphate = 3-(imidazol-4-yl)-2-oxopropyl phosphate + H2O. The protein operates within amino-acid biosynthesis; L-histidine biosynthesis; L-histidine from 5-phospho-alpha-D-ribose 1-diphosphate: step 6/9. The polypeptide is Imidazoleglycerol-phosphate dehydratase (Parvibaculum lavamentivorans (strain DS-1 / DSM 13023 / NCIMB 13966)).